We begin with the raw amino-acid sequence, 157 residues long: Ribosomal RNA large subunit methyltransferase H (157 aa).

Residues Gly104 and 123–128 contribute to the S-adenosyl-L-methionine site; that span reads LSSLTL.

This sequence belongs to the RNA methyltransferase RlmH family. In terms of assembly, homodimer.

It is found in the cytoplasm. It carries out the reaction pseudouridine(1915) in 23S rRNA + S-adenosyl-L-methionine = N(3)-methylpseudouridine(1915) in 23S rRNA + S-adenosyl-L-homocysteine + H(+). In terms of biological role, specifically methylates the pseudouridine at position 1915 (m3Psi1915) in 23S rRNA. The polypeptide is Ribosomal RNA large subunit methyltransferase H (Nitrosococcus oceani (strain ATCC 19707 / BCRC 17464 / JCM 30415 / NCIMB 11848 / C-107)).